A 316-amino-acid chain; its full sequence is Protoheme IX farnesyltransferase (316 aa).

Transmembrane regions (helical) follow at residues 29 to 49 (IIPLLLITTAASMWIASEGRV), 54 to 74 (LLITLLGGTLAAASAQTLNCI), 102 to 122 (LIFALALGVLSFALLATFVNV), 123 to 143 (LSGCLALSGIVFYMLVYTHWL), 151 to 171 (IVIGGAAGSIPPLVGWAAVTG), 179 to 199 (VLFALIFLWTPPHFWALALMI), 224 to 241 (IWYYSLLVVPFSLLLVYP), 245 to 267 (LGILYLAIAIILGGQFLVKAWQL), and 283 to 303 (FSIFYLMLLCLAMVIDSLPVT).

This sequence belongs to the UbiA prenyltransferase family. Protoheme IX farnesyltransferase subfamily.

It is found in the cell inner membrane. The catalysed reaction is heme b + (2E,6E)-farnesyl diphosphate + H2O = Fe(II)-heme o + diphosphate. It functions in the pathway porphyrin-containing compound metabolism; heme O biosynthesis; heme O from protoheme: step 1/1. Converts heme B (protoheme IX) to heme O by substitution of the vinyl group on carbon 2 of heme B porphyrin ring with a hydroxyethyl farnesyl side group. The polypeptide is Protoheme IX farnesyltransferase (Synechocystis sp. (strain ATCC 27184 / PCC 6803 / Kazusa)).